A 148-amino-acid polypeptide reads, in one-letter code: MALRPGREGGESSAALATAQARFSRGEFAEARELYSAFIGQCARHGSKCSPEDLATAYNNRGQTKYFSVDFYEAMDDYTSAIEILPSFEVPYYNRGLIRYRLGYFDEALEDFKKALDLNPGFQDAVLSLKQTILDKEEKQRRNAEKSY.

TPR repeat units lie at residues 12-45 (SSAA…CARH), 55-88 (ATAY…LPSF), and 89-122 (EVPY…NPGF).

This is Tetratricopeptide repeat protein 32 (Ttc32) from Mus musculus (Mouse).